A 133-amino-acid chain; its full sequence is Small ribosomal subunit protein uS8 (133 aa).

This sequence belongs to the universal ribosomal protein uS8 family. Part of the 30S ribosomal subunit. Contacts proteins S5 and S12.

Its function is as follows. One of the primary rRNA binding proteins, it binds directly to 16S rRNA central domain where it helps coordinate assembly of the platform of the 30S subunit. The sequence is that of Small ribosomal subunit protein uS8 from Gloeobacter violaceus (strain ATCC 29082 / PCC 7421).